Here is a 123-residue protein sequence, read N- to C-terminus: Small ribosomal subunit protein uS13 (123 aa).

The segment at 96–123 (LPVRGQRTKTNARTRKGPKKTVGARRKK) is disordered.

This sequence belongs to the universal ribosomal protein uS13 family. In terms of assembly, part of the 30S ribosomal subunit. Forms a loose heterodimer with protein S19. Forms two bridges to the 50S subunit in the 70S ribosome.

Located at the top of the head of the 30S subunit, it contacts several helices of the 16S rRNA. In the 70S ribosome it contacts the 23S rRNA (bridge B1a) and protein L5 of the 50S subunit (bridge B1b), connecting the 2 subunits; these bridges are implicated in subunit movement. Contacts the tRNAs in the A and P-sites. This chain is Small ribosomal subunit protein uS13, found in Desulforamulus reducens (strain ATCC BAA-1160 / DSM 100696 / MI-1) (Desulfotomaculum reducens).